Consider the following 35-residue polypeptide: Photosystem II reaction center protein T (35 aa).

The helical transmembrane segment at 3-23 (ALVYTFLLVSTLGIIFFAIFF) threads the bilayer.

The protein belongs to the PsbT family. In terms of assembly, PSII is composed of 1 copy each of membrane proteins PsbA, PsbB, PsbC, PsbD, PsbE, PsbF, PsbH, PsbI, PsbJ, PsbK, PsbL, PsbM, PsbT, PsbY, PsbZ, Psb30/Ycf12, at least 3 peripheral proteins of the oxygen-evolving complex and a large number of cofactors. It forms dimeric complexes.

It is found in the plastid. It localises to the chloroplast thylakoid membrane. Found at the monomer-monomer interface of the photosystem II (PS II) dimer, plays a role in assembly and dimerization of PSII. PSII is a light-driven water plastoquinone oxidoreductase, using light energy to abstract electrons from H(2)O, generating a proton gradient subsequently used for ATP formation. The polypeptide is Photosystem II reaction center protein T (Citrus sinensis (Sweet orange)).